Reading from the N-terminus, the 194-residue chain is Peptidyl-tRNA hydrolase (194 aa).

Tyr-16 is a tRNA binding site. The active-site Proton acceptor is the His-21. TRNA-binding residues include Phe-67, Asn-69, and Asn-115.

It belongs to the PTH family. Monomer.

The protein localises to the cytoplasm. It catalyses the reaction an N-acyl-L-alpha-aminoacyl-tRNA + H2O = an N-acyl-L-amino acid + a tRNA + H(+). In terms of biological role, hydrolyzes ribosome-free peptidyl-tRNAs (with 1 or more amino acids incorporated), which drop off the ribosome during protein synthesis, or as a result of ribosome stalling. Its function is as follows. Catalyzes the release of premature peptidyl moieties from peptidyl-tRNA molecules trapped in stalled 50S ribosomal subunits, and thus maintains levels of free tRNAs and 50S ribosomes. The chain is Peptidyl-tRNA hydrolase from Escherichia coli O81 (strain ED1a).